The primary structure comprises 702 residues: Polyribonucleotide nucleotidyltransferase (702 aa).

Mg(2+) is bound by residues D484 and D490. A KH domain is found at 551–610; it reads PHIESFKIAVEKIGALIGPGGKTVKSLSDQYRVTINTDSDGTVTVSGRDAQSVFDAKVAV. Positions 620–688 constitute an S1 motif domain; that stretch reads GRVYQGVVKR…RMGRLNLSYI (69 aa).

The protein belongs to the polyribonucleotide nucleotidyltransferase family. Mg(2+) serves as cofactor.

The protein localises to the cytoplasm. The catalysed reaction is RNA(n+1) + phosphate = RNA(n) + a ribonucleoside 5'-diphosphate. Involved in mRNA degradation. Catalyzes the phosphorolysis of single-stranded polyribonucleotides processively in the 3'- to 5'-direction. In Treponema pallidum (strain Nichols), this protein is Polyribonucleotide nucleotidyltransferase.